The following is a 59-amino-acid chain: Large ribosomal subunit protein uL30 (59 aa).

The protein belongs to the universal ribosomal protein uL30 family. Part of the 50S ribosomal subunit.

The protein is Large ribosomal subunit protein uL30 of Pectobacterium atrosepticum (strain SCRI 1043 / ATCC BAA-672) (Erwinia carotovora subsp. atroseptica).